The chain runs to 445 residues: Chromosome partition protein MukF (445 aa).

Positions 213–241 (LSETSATLKELQDTLQAAGDELQTQILDI) are leucine-zipper.

Belongs to the MukF family. As to quaternary structure, interacts, and probably forms a ternary complex, with MukE and MukB via its C-terminal region. The complex formation is stimulated by calcium or magnesium. It is required for an interaction between MukE and MukB.

The protein resides in the cytoplasm. Its subcellular location is the nucleoid. Involved in chromosome condensation, segregation and cell cycle progression. May participate in facilitating chromosome segregation by condensation DNA from both sides of a centrally located replisome during cell division. Not required for mini-F plasmid partitioning. Probably acts via its interaction with MukB and MukE. Overexpression results in anucleate cells. It has a calcium binding activity. The chain is Chromosome partition protein MukF from Vibrio atlanticus (strain LGP32) (Vibrio splendidus (strain Mel32)).